Here is a 236-residue protein sequence, read N- to C-terminus: Phosphatidylserine decarboxylase proenzyme (236 aa).

Serine 203 acts as the Schiff-base intermediate with substrate; via pyruvic acid in catalysis. Serine 203 carries the pyruvic acid (Ser); by autocatalysis modification.

It belongs to the phosphatidylserine decarboxylase family. PSD-A subfamily. Heterodimer of a large membrane-associated beta subunit and a small pyruvoyl-containing alpha subunit. It depends on pyruvate as a cofactor. Is synthesized initially as an inactive proenzyme. Formation of the active enzyme involves a self-maturation process in which the active site pyruvoyl group is generated from an internal serine residue via an autocatalytic post-translational modification. Two non-identical subunits are generated from the proenzyme in this reaction, and the pyruvate is formed at the N-terminus of the alpha chain, which is derived from the carboxyl end of the proenzyme. The post-translation cleavage follows an unusual pathway, termed non-hydrolytic serinolysis, in which the side chain hydroxyl group of the serine supplies its oxygen atom to form the C-terminus of the beta chain, while the remainder of the serine residue undergoes an oxidative deamination to produce ammonia and the pyruvoyl prosthetic group on the alpha chain.

It localises to the cell membrane. It catalyses the reaction a 1,2-diacyl-sn-glycero-3-phospho-L-serine + H(+) = a 1,2-diacyl-sn-glycero-3-phosphoethanolamine + CO2. Its pathway is phospholipid metabolism; phosphatidylethanolamine biosynthesis; phosphatidylethanolamine from CDP-diacylglycerol: step 2/2. Catalyzes the formation of phosphatidylethanolamine (PtdEtn) from phosphatidylserine (PtdSer). The polypeptide is Phosphatidylserine decarboxylase proenzyme (Saccharopolyspora erythraea (strain ATCC 11635 / DSM 40517 / JCM 4748 / NBRC 13426 / NCIMB 8594 / NRRL 2338)).